A 240-amino-acid polypeptide reads, in one-letter code: 6-phosphogluconolactonase (240 aa).

This sequence belongs to the glucosamine/galactosamine-6-phosphate isomerase family. 6-phosphogluconolactonase subfamily.

The enzyme catalyses 6-phospho-D-glucono-1,5-lactone + H2O = 6-phospho-D-gluconate + H(+). It functions in the pathway carbohydrate degradation; pentose phosphate pathway; D-ribulose 5-phosphate from D-glucose 6-phosphate (oxidative stage): step 2/3. Its function is as follows. Hydrolysis of 6-phosphogluconolactone to 6-phosphogluconate. This is 6-phosphogluconolactonase (pgl) from Nostoc sp. (strain PCC 7120 / SAG 25.82 / UTEX 2576).